We begin with the raw amino-acid sequence, 90 residues long: Major envelope protein (90 aa).

The chain crosses the membrane as a helical span at residues 53–70 (AVSVVSWAVAAGLIGELI).

It localises to the virion membrane. In terms of biological role, essential for membrane formation. In Pseudomonas savastanoi pv. phaseolicola (Pseudomonas syringae pv. phaseolicola), this protein is Major envelope protein (P9).